The chain runs to 307 residues: Putative gluconeogenesis factor (307 aa).

The protein belongs to the gluconeogenesis factor family.

The protein resides in the cytoplasm. In terms of biological role, required for morphogenesis under gluconeogenic growth conditions. This is Putative gluconeogenesis factor from Yersinia pestis.